Consider the following 208-residue polypeptide: Protein-L-isoaspartate O-methyltransferase (208 aa).

Ser-59 is a catalytic residue.

This sequence belongs to the methyltransferase superfamily. L-isoaspartyl/D-aspartyl protein methyltransferase family.

The protein resides in the cytoplasm. The enzyme catalyses [protein]-L-isoaspartate + S-adenosyl-L-methionine = [protein]-L-isoaspartate alpha-methyl ester + S-adenosyl-L-homocysteine. Catalyzes the methyl esterification of L-isoaspartyl residues in peptides and proteins that result from spontaneous decomposition of normal L-aspartyl and L-asparaginyl residues. It plays a role in the repair and/or degradation of damaged proteins. The polypeptide is Protein-L-isoaspartate O-methyltransferase (Vibrio campbellii (strain ATCC BAA-1116)).